The chain runs to 411 residues: Lissencephaly-1 homolog (411 aa).

A LisH domain is found at 9–41 (QREELNQAIADYLGSNGYADSLEAFRKEADLST). Residues 56-83 (TSVIRLQKKVMELEAKLTEAEKEVIEGA) adopt a coiled-coil conformation. WD repeat units lie at residues 106-147 (GHRA…RSLK), 148-187 (GHTD…ECVK), 191-230 (GHDH…CVKT), 233-272 (GHRE…CKVE), 275-334 (DHEH…CLFT), 337-376 (GHDN…CMKT), and 379-411 (AHQH…WECR).

This sequence belongs to the WD repeat LIS1/nudF family.

Its subcellular location is the cytoplasm. The protein localises to the cytoskeleton. The protein resides in the microtubule organizing center. It localises to the centrosome. In terms of biological role, positively regulates the activity of the minus-end directed microtubule motor protein dynein. May enhance dynein-mediated microtubule sliding by targeting dynein to the microtubule plus end. Required for several dynein- and microtubule-dependent processes. This chain is Lissencephaly-1 homolog, found in Drosophila ananassae (Fruit fly).